A 448-amino-acid chain; its full sequence is Chromosomal replication initiator protein DnaA (448 aa).

Residues M1–K73 form a domain I, interacts with DnaA modulators region. Residues K73–T109 form a domain II region. The domain III, AAA+ region stretch occupies residues M110–S326. ATP-binding residues include G154, G156, K157, and T158. A domain IV, binds dsDNA region spans residues S327–K448.

This sequence belongs to the DnaA family. As to quaternary structure, oligomerizes as a right-handed, spiral filament on DNA at oriC.

The protein localises to the cytoplasm. Plays an essential role in the initiation and regulation of chromosomal replication. ATP-DnaA binds to the origin of replication (oriC) to initiate formation of the DNA replication initiation complex once per cell cycle. Binds the DnaA box (a 9 base pair repeat at the origin) and separates the double-stranded (ds)DNA. Forms a right-handed helical filament on oriC DNA; dsDNA binds to the exterior of the filament while single-stranded (ss)DNA is stabiized in the filament's interior. The ATP-DnaA-oriC complex binds and stabilizes one strand of the AT-rich DNA unwinding element (DUE), permitting loading of DNA polymerase. After initiation quickly degrades to an ADP-DnaA complex that is not apt for DNA replication. Binds acidic phospholipids. In Clostridium botulinum (strain ATCC 19397 / Type A), this protein is Chromosomal replication initiator protein DnaA.